Here is a 121-residue protein sequence, read N- to C-terminus: Large ribosomal subunit protein bL12 (121 aa).

Belongs to the bacterial ribosomal protein bL12 family. In terms of assembly, homodimer. Part of the ribosomal stalk of the 50S ribosomal subunit. Forms a multimeric L10(L12)X complex, where L10 forms an elongated spine to which 2 to 4 L12 dimers bind in a sequential fashion. Binds GTP-bound translation factors.

Functionally, forms part of the ribosomal stalk which helps the ribosome interact with GTP-bound translation factors. Is thus essential for accurate translation. This is Large ribosomal subunit protein bL12 from Tolumonas auensis (strain DSM 9187 / NBRC 110442 / TA 4).